The following is a 204-amino-acid chain: Refilin-A (204 aa).

Residues 1–52 form a disordered region; it reads MVGHLHLQAMGDTREQSRDGLLDSPDSGLPPSPSPSPPFYALSPGTLDTRTT. A compositionally biased stretch (basic and acidic residues) spans 12–21; that stretch reads DTREQSRDGL. Over residues 28–38 the composition is skewed to pro residues; the sequence is GLPPSPSPSPP. Arginine 151 bears the Asymmetric dimethylarginine mark.

It belongs to the Refilin family. As to quaternary structure, interacts with FLNA and FLNB. Detected in various tissues, with highest expression in lung, followed by spleen.

It is found in the cytoplasm. The protein resides in the cytoskeleton. Functionally, involved in the regulation of the perinuclear actin network and nuclear shape through interaction with filamins. Plays an essential role in the formation of cartilaginous skeletal elements. In Mus musculus (Mouse), this protein is Refilin-A (Rflna).